Consider the following 131-residue polypeptide: Insertion element iso-IS1n protein InsB (131 aa).

The protein belongs to the transposase 27 family.

In terms of biological role, absolutely required for transposition of IS1. The polypeptide is Insertion element iso-IS1n protein InsB (insB) (Shigella dysenteriae).